A 200-amino-acid chain; its full sequence is Large ribosomal subunit protein uL4 (200 aa).

The segment at 43–71 (RAQKTRAEVSGSGKKPWRQKGTGRARSGD) is disordered.

It belongs to the universal ribosomal protein uL4 family. In terms of assembly, part of the 50S ribosomal subunit.

In terms of biological role, one of the primary rRNA binding proteins, this protein initially binds near the 5'-end of the 23S rRNA. It is important during the early stages of 50S assembly. It makes multiple contacts with different domains of the 23S rRNA in the assembled 50S subunit and ribosome. Functionally, forms part of the polypeptide exit tunnel. This is Large ribosomal subunit protein uL4 from Pasteurella multocida (strain Pm70).